A 231-amino-acid chain; its full sequence is ATP phosphoribosyltransferase (231 aa).

It belongs to the ATP phosphoribosyltransferase family. Short subfamily. As to quaternary structure, heteromultimer composed of HisG and HisZ subunits.

The protein resides in the cytoplasm. The catalysed reaction is 1-(5-phospho-beta-D-ribosyl)-ATP + diphosphate = 5-phospho-alpha-D-ribose 1-diphosphate + ATP. The protein operates within amino-acid biosynthesis; L-histidine biosynthesis; L-histidine from 5-phospho-alpha-D-ribose 1-diphosphate: step 1/9. Functionally, catalyzes the condensation of ATP and 5-phosphoribose 1-diphosphate to form N'-(5'-phosphoribosyl)-ATP (PR-ATP). Has a crucial role in the pathway because the rate of histidine biosynthesis seems to be controlled primarily by regulation of HisG enzymatic activity. The chain is ATP phosphoribosyltransferase from Brucella melitensis biotype 2 (strain ATCC 23457).